The primary structure comprises 202 residues: Thymidylate kinase (202 aa).

13 to 20 (GTDGAGKS) provides a ligand contact to ATP.

This sequence belongs to the thymidylate kinase family.

The catalysed reaction is dTMP + ATP = dTDP + ADP. In terms of biological role, phosphorylation of dTMP to form dTDP in both de novo and salvage pathways of dTTP synthesis. This chain is Thymidylate kinase, found in Desulfotalea psychrophila (strain LSv54 / DSM 12343).